The chain runs to 192 residues: Fe/S biogenesis protein NfuA (192 aa).

The [4Fe-4S] cluster site is built by C149 and C152.

It belongs to the NfuA family. As to quaternary structure, homodimer. Requires [4Fe-4S] cluster as cofactor.

Functionally, involved in iron-sulfur cluster biogenesis. Binds a 4Fe-4S cluster, can transfer this cluster to apoproteins, and thereby intervenes in the maturation of Fe/S proteins. Could also act as a scaffold/chaperone for damaged Fe/S proteins. The protein is Fe/S biogenesis protein NfuA of Proteus mirabilis (strain HI4320).